The sequence spans 286 residues: MVAVIIKGNEVAEKKRAQLTEEVVKLKEQGIVPGLAVILVGEDPASRSYVKGKEKGCEQVGIYSELIELPETITEERLLAEIDRLNGDDRINGILVQLPLPKHIEEKAIIERISPEKDVDGFHPISVGRMMTGQDTFLPCTPHGIVELVKETNLDISGKHVVVIGRSNIVGKPVGQLFLNENATVTYCHSKTQNMKELSKLADILIVAVGRPKMITADYIKEGAVVIDVGVNRLETGKLCGDVDFDNVLNVAGYITPVPKGVGPMTITMLLHNTVESAKRAGVVCK.

NADP(+)-binding positions include 165–167 (GRS), Ser190, and Val231.

The protein belongs to the tetrahydrofolate dehydrogenase/cyclohydrolase family. In terms of assembly, homodimer.

The catalysed reaction is (6R)-5,10-methylene-5,6,7,8-tetrahydrofolate + NADP(+) = (6R)-5,10-methenyltetrahydrofolate + NADPH. The enzyme catalyses (6R)-5,10-methenyltetrahydrofolate + H2O = (6R)-10-formyltetrahydrofolate + H(+). The protein operates within one-carbon metabolism; tetrahydrofolate interconversion. Catalyzes the oxidation of 5,10-methylenetetrahydrofolate to 5,10-methenyltetrahydrofolate and then the hydrolysis of 5,10-methenyltetrahydrofolate to 10-formyltetrahydrofolate. This chain is Bifunctional protein FolD, found in Bacillus cereus (strain G9842).